The chain runs to 611 residues: Dual specificity protein phosphatase CDC14AB (611 aa).

The segment at 23-178 (DLLGASEFIK…ALQHGFLNFE (156 aa)) is a. Positions 179–192 (TFDVNEYEHYERVE) are linker. Positions 193-359 (NGDLNWITPG…HGDSLRSKQR (167 aa)) are b. A Tyrosine-protein phosphatase domain is found at 194-352 (GDLNWITPGK…KQASLWAHGD (159 aa)). Cys-294 (phosphocysteine intermediate) is an active-site residue. Positions 408–611 (KLRALKGRRQ…PSLQSEYVQY (204 aa)) are disordered. Over residues 456–490 (SPLKSSKVPASSSSSSSSSSVSASAKRIGRSSSSS) the composition is skewed to low complexity. Positions 491–511 (TNLKSTRLASSLGNLYEPNTE) are enriched in polar residues. Low complexity predominate over residues 512 to 553 (SISSGKPPSPSSFTPHPVRTTYNYHYEVNNNNNQYSTTSSPS). Polar residues-rich tracts occupy residues 554–569 (KSLG…SGAS) and 591–611 (GLST…YVQY).

The protein belongs to the protein-tyrosine phosphatase family. Non-receptor class CDC14 subfamily.

The protein localises to the nucleus. Its subcellular location is the cytoplasm. It localises to the cytoskeleton. The protein resides in the microtubule organizing center. It is found in the centrosome. The protein localises to the spindle pole. Its subcellular location is the spindle. It localises to the cell projection. The protein resides in the kinocilium. The enzyme catalyses O-phospho-L-tyrosyl-[protein] + H2O = L-tyrosyl-[protein] + phosphate. It carries out the reaction O-phospho-L-seryl-[protein] + H2O = L-seryl-[protein] + phosphate. The catalysed reaction is O-phospho-L-threonyl-[protein] + H2O = L-threonyl-[protein] + phosphate. Functionally, dual-specificity phosphatase. Required for centrosome separation and productive cytokinesis during cell division. Dephosphorylates SIRT2 around early anaphase. May dephosphorylate the APC subunit FZR1/CDH1, thereby promoting APC-FZR1 dependent degradation of mitotic cyclins and subsequent exit from mitosis. This chain is Dual specificity protein phosphatase CDC14AB (cdc14ab), found in Danio rerio (Zebrafish).